We begin with the raw amino-acid sequence, 312 residues long: Homoserine O-succinyltransferase (312 aa).

The active-site Acyl-thioester intermediate is Cys-142. Substrate contacts are provided by Lys-163 and Ser-192. His-235 acts as the Proton acceptor in catalysis. Glu-237 is a catalytic residue. Arg-249 contacts substrate.

This sequence belongs to the MetA family.

It is found in the cytoplasm. It catalyses the reaction L-homoserine + succinyl-CoA = O-succinyl-L-homoserine + CoA. It participates in amino-acid biosynthesis; L-methionine biosynthesis via de novo pathway; O-succinyl-L-homoserine from L-homoserine: step 1/1. Transfers a succinyl group from succinyl-CoA to L-homoserine, forming succinyl-L-homoserine. This Alteromonas mediterranea (strain DSM 17117 / CIP 110805 / LMG 28347 / Deep ecotype) protein is Homoserine O-succinyltransferase.